The primary structure comprises 154 residues: Myoglobin (154 aa).

Residues 2-148 (GLSEGEWQLV…FRKDIATKYK (147 aa)) enclose the Globin domain. Ser-4 is subject to Phosphoserine. His-65 provides a ligand contact to nitrite. His-65 contributes to the O2 binding site. Thr-68 carries the phosphothreonine modification. His-94 contacts heme b.

It belongs to the globin family. In terms of assembly, monomeric.

It is found in the cytoplasm. Its subcellular location is the sarcoplasm. It carries out the reaction Fe(III)-heme b-[protein] + nitric oxide + H2O = Fe(II)-heme b-[protein] + nitrite + 2 H(+). The enzyme catalyses H2O2 + AH2 = A + 2 H2O. Monomeric heme protein which primary function is to store oxygen and facilitate its diffusion within muscle tissues. Reversibly binds oxygen through a pentacoordinated heme iron and enables its timely and efficient release as needed during periods of heightened demand. Depending on the oxidative conditions of tissues and cells, and in addition to its ability to bind oxygen, it also has a nitrite reductase activity whereby it regulates the production of bioactive nitric oxide. Under stress conditions, like hypoxia and anoxia, it also protects cells against reactive oxygen species thanks to its pseudoperoxidase activity. The polypeptide is Myoglobin (MB) (Phocoenoides dalli dalli (Dall's porpoise)).